The following is a 582-amino-acid chain: Aspartate--tRNA ligase (582 aa).

Residues 198 to 201 (QIFK) form an aspartate region. Arg220 is a binding site for L-aspartate. Residues 220 to 222 (RDE) and Gln229 contribute to the ATP site. His445 provides a ligand contact to L-aspartate. Glu479 contacts ATP. Arg486 contacts L-aspartate. ATP is bound at residue 531-534 (GFDR).

It belongs to the class-II aminoacyl-tRNA synthetase family. Type 1 subfamily. As to quaternary structure, homodimer.

It is found in the cytoplasm. The enzyme catalyses tRNA(Asp) + L-aspartate + ATP = L-aspartyl-tRNA(Asp) + AMP + diphosphate. Its function is as follows. Catalyzes the attachment of L-aspartate to tRNA(Asp) in a two-step reaction: L-aspartate is first activated by ATP to form Asp-AMP and then transferred to the acceptor end of tRNA(Asp). This Amoebophilus asiaticus (strain 5a2) protein is Aspartate--tRNA ligase.